The sequence spans 460 residues: tRNA modification GTPase MnmE (460 aa).

Residues Arg-29, Glu-91, and Lys-132 each coordinate (6S)-5-formyl-5,6,7,8-tetrahydrofolate. The 157-residue stretch at 227–383 folds into the TrmE-type G domain; sequence GISIALIGKT…LIDTIIKKCG (157 aa). Residue Asn-237 participates in K(+) binding. Residues 237–242, 256–262, and 281–284 contribute to the GTP site; these read NVGKSS, TNIPGTT, and DTAG. Ser-241 is a Mg(2+) binding site. Positions 256, 258, and 261 each coordinate K(+). Mg(2+) is bound at residue Thr-262. Lys-460 is a (6S)-5-formyl-5,6,7,8-tetrahydrofolate binding site.

Belongs to the TRAFAC class TrmE-Era-EngA-EngB-Septin-like GTPase superfamily. TrmE GTPase family. In terms of assembly, homodimer. Heterotetramer of two MnmE and two MnmG subunits. It depends on K(+) as a cofactor.

It localises to the cytoplasm. Exhibits a very high intrinsic GTPase hydrolysis rate. Involved in the addition of a carboxymethylaminomethyl (cmnm) group at the wobble position (U34) of certain tRNAs, forming tRNA-cmnm(5)s(2)U34. This chain is tRNA modification GTPase MnmE, found in Prochlorococcus marinus (strain MIT 9312).